We begin with the raw amino-acid sequence, 2135 residues long: Plexin-B1 (2135 aa).

The first 19 residues, 1–19, serve as a signal peptide directing secretion; the sequence is MPALGPALLQALWAGWVLT. Residues 20 to 479 enclose the Sema domain; that stretch reads LQPLPPTAFT…TQSTLLKVPV (460 aa). The Extracellular segment spans residues 20-1490; that stretch reads LQPLPPTAFT…SPGAFPVAAQ (1471 aa). An N-linked (GlcNAc...) asparagine glycan is attached at Asn-31. Disulfide bonds link Cys-79–Cys-88, Cys-111–Cys-119, Cys-252–Cys-377, Cys-268–Cys-322, Cys-340–Cys-364, Cys-482–Cys-499, Cys-488–Cys-533, Cys-491–Cys-508, and Cys-502–Cys-514. A glycan (N-linked (GlcNAc...) asparagine) is linked at Asn-334. A glycan (N-linked (GlcNAc...) asparagine) is linked at Asn-543. Cys-570 and Cys-588 are disulfide-bonded. Disordered stretches follow at residues 671 to 829 and 849 to 884; these read MVAS…TTFP and LPEA…PPAP. Residues 681-697 are compositionally biased toward pro residues; that stretch reads SPDPPARGGPSPSPPTA. Composition is skewed to low complexity over residues 698–710 and 734–754; these read PKAL…DTLP and SPWG…TGSP. 3 IPT/TIG domains span residues 1070–1160, 1162–1249, and 1252–1375; these read PLIH…FAYQ, PKVH…FKYT, and PNIT…FSYE. N-linked (GlcNAc...) asparagine glycosylation is found at Asn-1183, Asn-1253, and Asn-1330. The helical transmembrane segment at 1491–1511 threads the bilayer; that stretch reads VGLGVGTSLLALGVIIIVLMY. Residues 1507–1539 adopt a coiled-coil conformation; the sequence is IVLMYRRKSKQALRDYKKVQIQLENLESSVRDR. Residues 1512–2135 are Cytoplasmic-facing; the sequence is RRKSKQALRD…AAVENKVTDL (624 aa). Residues 1883-1908 are disordered; that stretch reads PWHLVKPSDEPEPPRPRRGSLRGGER. Positions 1888–1897 are enriched in basic and acidic residues; the sequence is KPSDEPEPPR.

Belongs to the plexin family. In terms of assembly, monomer, and heterodimer with PLXNB2 after proteolytic processing. Binds RAC1 that has been activated by GTP binding. Interaction with SEMA4D promotes binding of cytoplasmic ligands. Interacts with PLXNA1. Interacts with ARHGEF11 and ARHGEF12. Interacts with ERBB2. Interacts with MET. Interacts with MST1R. Interacts with RRAS. Interacts with RHOD. Interacts with RND1. Interacts with NRP1 and NRP2. In terms of processing, phosphorylated on tyrosine residues by ERBB2 and MET upon SEMA4D binding. Post-translationally, proteolytic processing favors heterodimerization with PLXNB2 and SEMA4D binding. As to expression, highly expressed in fetal kidney, and at slightly lower levels in fetal brain, lung and liver.

It is found in the cell membrane. It localises to the secreted. In terms of biological role, receptor for SEMA4D. Plays a role in GABAergic synapse development. Mediates SEMA4A- and SEMA4D-dependent inhibitory synapse development. Plays a role in RHOA activation and subsequent changes of the actin cytoskeleton. Plays a role in axon guidance, invasive growth and cell migration. In Homo sapiens (Human), this protein is Plexin-B1 (PLXNB1).